Here is a 910-residue protein sequence, read N- to C-terminus: von Willebrand factor A domain-containing protein DDB_G0292740 (910 aa).

A VIT domain is found at 63-194; that stretch reads AYQYYNVSSF…SITIHITMIS (132 aa). The disordered stretch occupies residues 297 to 318; it reads IKNNPHSDSDSDSDDEENKKEN. A VWFA domain is found at 346–515; that stretch reads EFIFLIDCSG…DMETEVMKLL (170 aa). Residues 703-719 show a composition bias toward low complexity; the sequence is QYQQQQQQQQQNFNSGF. The disordered stretch occupies residues 703 to 815; sequence QYQQQQQQQQ…TQSESTPSND (113 aa). Over residues 720–749 the composition is skewed to pro residues; it reads APPPPPMMSSGPPPPPGSSFGAPPPPPPGG. The span at 750–802 shows a compositional bias: low complexity; that stretch reads AFPTSSISEKKSSSQSSSSYLPPTMSLSRKSSLSPSSPSKNYPSPKLSSPSLS. Residues 803–815 show a composition bias toward polar residues; the sequence is YGSTQSESTPSND.

In Dictyostelium discoideum (Social amoeba), this protein is von Willebrand factor A domain-containing protein DDB_G0292740.